The primary structure comprises 533 residues: Putative adhesin P1-like protein MPN_409 (533 aa).

Disordered stretches follow at residues 15–45 and 92–166; these read KNHR…GSRS and SGWR…SITP. Residues 28–45 show a composition bias toward low complexity; the sequence is TGAGSSSGTSTNTSGSRS. Residues 95–107 are compositionally biased toward basic and acidic residues; sequence RNDKNGQSDENHT.

It belongs to the adhesin P1 family.

The protein is Putative adhesin P1-like protein MPN_409 of Mycoplasma pneumoniae (strain ATCC 29342 / M129 / Subtype 1) (Mycoplasmoides pneumoniae).